The sequence spans 1511 residues: Bifunctional glutamate/proline--tRNA ligase (1511 aa).

Positions 164 to 758 are glutamate--tRNA ligase; it reads GTKWDVSENK…SSVLYNRVAA (595 aa). Positions 204–214 match the 'HIGH' region motif; it reads PEASGYLHIGH. A disordered region spans residues 296-315; sequence AEQMKAEREQRAESKHRQNS. Residues 299–315 show a composition bias toward basic and acidic residues; that stretch reads MKAEREQRAESKHRQNS. At Lys-300 the chain carries N6-acetyllysine; alternate. An N6-malonyllysine; alternate modification is found at Lys-300. At Thr-355 the chain carries Phosphothreonine. Position 417 is an N6-acetyllysine (Lys-417). Residues 432–436 carry the 'KMSKS' region motif; that stretch reads VLSKR. Ser-434 is modified (phosphoserine). An N6-acetyllysine mark is found at Lys-498, Lys-535, Lys-542, and Lys-637. Residues 708–728 are compositionally biased toward basic and acidic residues; the sequence is KEMPTSGSKEKTKAEPLKKET. The disordered stretch occupies residues 708-741; that stretch reads KEMPTSGSKEKTKAEPLKKETSSAPKEGPVPAVS. Ser-746 bears the Phosphoserine mark. Positions 748 to 804 constitute a WHEP-TRS 1 domain; sequence ESSVLYNRVAAQGDVVRELKAKKAAKEDVDAAVKQLLALKAEYKQKTGQEYKPGNPP. Residues 759 to 955 are 3 X 57 AA approximate repeats; it reads QGDVVRELKA…GIEYKPVSAT (197 aa). Position 787 is an N6-acetyllysine (Lys-787). The disordered stretch occupies residues 794–823; that stretch reads TGQEYKPGNPPSAAAQSASTKSLPSAGEDR. Residues 807-816 are compositionally biased toward polar residues; that stretch reads AAQSASTKSL. The 57-residue stretch at 821 to 877 folds into the WHEP-TRS 2 domain; sequence EDRSLYDKIAAQGEVVRKLKAEKAPKAKVTEAVECLLSLKAEYKEKTGKEYVPGQPP. Lys-860 is subject to N6-acetyllysine. 2 disordered regions span residues 868–903 and 952–1015; these read GKEY…AKAL and VSAT…RLGL. Tyr-871 carries the post-translational modification Phosphotyrosine. The segment covering 877–890 has biased composition (low complexity); that stretch reads PASQKSQPSPASKA. At Ser-885 the chain carries Phosphoserine; by CDK5. Thr-897 is subject to Phosphothreonine. One can recognise a WHEP-TRS 3 domain in the interval 899–955; the sequence is EAKALFDRVACQGEVVRKLKAEKASKDQVDPAVQELLQLKAQYKSLTGIEYKPVSAT. Positions 957-975 are enriched in basic and acidic residues; sequence SEDKDKKKKEKENKSEKQN. Over residues 992–1005 the composition is skewed to gly residues; that stretch reads QGGGLSSSGAGEGQ. Ser-997 is subject to Phosphoserine. Ser-998 is modified (phosphoserine; by RPS6KB1). Ser-999 carries the post-translational modification Phosphoserine. A proline--tRNA ligase region spans residues 1006–1511; sequence GPKKQTRLGL…KFYTLFGRSY (506 aa). L-proline is bound by residues 1120 to 1122 and Arg-1151; that span reads TSE. ATP is bound by residues Arg-1151, Glu-1153, Arg-1162, Thr-1163, Gln-1236, and Thr-1239. At Arg-1151 the chain carries Omega-N-methylarginine. Position 1236 (Gln-1236) interacts with Mg(2+). His-1241 contributes to the L-proline binding site. The ATP site is built by Thr-1275 and Arg-1277. Ser-1349 carries the phosphoserine modification. The Zn(2+) site is built by Cys-1447, Cys-1452, Cys-1494, and Cys-1496. N6-acetyllysine is present on Lys-1502.

In the N-terminal section; belongs to the class-I aminoacyl-tRNA synthetase family. Glutamate--tRNA ligase type 2 subfamily. It in the C-terminal section; belongs to the class-II aminoacyl-tRNA synthetase family. Homodimer. Part of the aminoacyl-tRNA synthetase multienzyme complex, also know as multisynthetase complex, that is composed of the tRNA ligases for Arg (RARS1), Asp (DARS1), Gln (QARS1), Ile (IARS1), Leu (LARS1), Lys (KARS1), Met (MARS1) the bifunctional ligase for Glu and Pro (EPRS1) and the auxiliary subunits AIMP1/p43, AIMP2/p38 and EEF1E1/p18. Forms a linear complex that contains MARS1, EEF1E1, EPRS1 and AIMP2 that is at the core of the multisubunit complex. Interacts with TARS3. Interacts with DUS2L. Component of the GAIT complex which is composed of EPRS1, RPL13A and GAPDH. Interacts (phosphorylated at Ser-998) with SLC27A1; mediates the translocation of SLC27A1 from the cytoplasm to the plasma membrane thereby increasing the uptake of long-chain fatty acids. Phosphorylated at Ser-998 by RPS6KB1; triggers EPRS1 release from the aminoacyl-tRNA synthetase multienzyme complex. In monocytes, the IFN-gamma-induced phosphorylation at Ser-998 releases EPRS1 from the aminoacyl-tRNA synthetase multienzyme complex, allowing its association with the GAIT complex. Phosphorylation at Ser-998 is specifically required for the RPL13A-mediated interaction of the GAIT complex with eIF4G. Phosphorylation at Ser-998 by RPS6KB1, is also induced by insulin through activation of the mTORC1 signaling pathway and promotes the interaction of EPRS1 with SLC27A1.

It is found in the cytoplasm. The protein localises to the cytosol. The protein resides in the membrane. The enzyme catalyses tRNA(Glu) + L-glutamate + ATP = L-glutamyl-tRNA(Glu) + AMP + diphosphate. It carries out the reaction tRNA(Pro) + L-proline + ATP = L-prolyl-tRNA(Pro) + AMP + diphosphate. Its function is as follows. Multifunctional protein which primarily functions within the aminoacyl-tRNA synthetase multienzyme complex, also known as multisynthetase complex. Within the complex it catalyzes the attachment of both L-glutamate and L-proline to their cognate tRNAs in a two-step reaction where the amino acid is first activated by ATP to form a covalent intermediate with AMP. Subsequently, the activated amino acid is transferred to the acceptor end of the cognate tRNA to form L-glutamyl-tRNA(Glu) and L-prolyl-tRNA(Pro). Upon interferon-gamma stimulation, EPRS1 undergoes phosphorylation, causing its dissociation from the aminoacyl-tRNA synthetase multienzyme complex. It is recruited to form the GAIT complex, which binds to stem loop-containing GAIT elements found in the 3'-UTR of various inflammatory mRNAs, such as ceruloplasmin. The GAIT complex inhibits the translation of these mRNAs, allowing interferon-gamma to redirect the function of EPRS1 from protein synthesis to translation inhibition in specific cell contexts. Furthermore, it can function as a downstream effector in the mTORC1 signaling pathway, by promoting the translocation of SLC27A1 from the cytoplasm to the plasma membrane where it mediates the uptake of long-chain fatty acid by adipocytes. Thereby, EPRS1 also plays a role in fat metabolism and more indirectly influences lifespan. In Cricetulus griseus (Chinese hamster), this protein is Bifunctional glutamate/proline--tRNA ligase.